The primary structure comprises 328 residues: Fructokinase-2 (328 aa).

This sequence belongs to the carbohydrate kinase PfkB family.

The enzyme catalyses D-fructose + ATP = D-fructose 6-phosphate + ADP + H(+). It participates in glycan biosynthesis; starch biosynthesis. May play an important role in maintaining the flux of carbon towards starch formation. This is Fructokinase-2 (FRK2) from Solanum habrochaites (Wild tomato).